We begin with the raw amino-acid sequence, 216 residues long: GTP cyclohydrolase 1 (216 aa).

Residues 1 to 33 (MPQARGEGATPPTSLPNPSLKGVPLPDNPNNLE) are disordered. Positions 24–33 (PLPDNPNNLE) are enriched in low complexity. 3 residues coordinate Zn(2+): cysteine 102, histidine 105, and cysteine 173.

It belongs to the GTP cyclohydrolase I family. Toroid-shaped homodecamer, composed of two pentamers of five dimers.

It catalyses the reaction GTP + H2O = 7,8-dihydroneopterin 3'-triphosphate + formate + H(+). The protein operates within cofactor biosynthesis; 7,8-dihydroneopterin triphosphate biosynthesis; 7,8-dihydroneopterin triphosphate from GTP: step 1/1. In Deinococcus radiodurans (strain ATCC 13939 / DSM 20539 / JCM 16871 / CCUG 27074 / LMG 4051 / NBRC 15346 / NCIMB 9279 / VKM B-1422 / R1), this protein is GTP cyclohydrolase 1 (folE).